A 192-amino-acid chain; its full sequence is Adenylate kinase (192 aa).

12–17 provides a ligand contact to ATP; the sequence is GSGKTT. Positions 34–63 are NMP; that stretch reads STGDLLRAEVASGSELGKTIDSFISKGNLV. Residues Thr-35, Arg-40, 61-63, 88-91, and Gln-95 each bind AMP; these read NLV and GYPR. The interval 130 to 136 is LID; that stretch reads GRNRGTD. An ATP-binding site is contributed by Arg-131. Residues Arg-133 and Arg-145 each coordinate AMP. Arg-173 is a binding site for ATP.

Belongs to the adenylate kinase family. As to quaternary structure, monomer.

The protein resides in the cytoplasm. It carries out the reaction AMP + ATP = 2 ADP. It participates in purine metabolism; AMP biosynthesis via salvage pathway; AMP from ADP: step 1/1. Catalyzes the reversible transfer of the terminal phosphate group between ATP and AMP. Plays an important role in cellular energy homeostasis and in adenine nucleotide metabolism. The polypeptide is Adenylate kinase (Campylobacter jejuni (strain RM1221)).